Here is an 874-residue protein sequence, read N- to C-terminus: Ectonucleotide pyrophosphatase/phosphodiesterase family member 3 (874 aa).

The Cytoplasmic segment spans residues 1 to 11 (MDSRLALATEE). A helical; Signal-anchor for type II membrane protein transmembrane segment spans residues 12–30 (PIKKDSLKKYKILCVVLLA). Topologically, residues 31–874 (LLVIVSLGLG…TYLPTFETII (844 aa)) are extracellular. SMB domains lie at 51-93 (QGSC…VKST) and 94-138 (QIWT…GESP). 13 disulfides stabilise this stretch: cysteine 54–cysteine 58, cysteine 54–cysteine 71, cysteine 58–cysteine 89, cysteine 69–cysteine 71, cysteine 69–cysteine 82, cysteine 75–cysteine 81, cysteine 82–cysteine 89, cysteine 98–cysteine 115, cysteine 103–cysteine 133, cysteine 113–cysteine 126, cysteine 119–cysteine 125, cysteine 144–cysteine 190, and cysteine 152–cysteine 364. The Cell attachment site signature appears at 78–80 (RGD). Residues 160 to 544 (PVILFSMDGF…HGSLNHLLKT (385 aa)) form a phosphodiesterase region. Zn(2+) is bound at residue aspartate 167. Lysine 204 is an ATP binding site. Threonine 205 serves as a coordination point for Zn(2+). The active-site Nucleophile is the threonine 205. ATP is bound at residue asparagine 226. A glycan (N-linked (GlcNAc...) asparagine) is linked at asparagine 236. Residue aspartate 275 coordinates ATP. 2 N-linked (GlcNAc...) asparagine glycosylation sites follow: asparagine 279 and asparagine 288. Tyrosine 289 lines the ATP pocket. Residues aspartate 325, histidine 329, aspartate 372, and histidine 373 each coordinate Zn(2+). Disulfide bonds link cysteine 380/cysteine 477, cysteine 428/cysteine 817, cysteine 561/cysteine 623, cysteine 574/cysteine 679, cysteine 576/cysteine 664, and cysteine 786/cysteine 796. A glycan (N-linked (GlcNAc...) asparagine) is linked at asparagine 425. Histidine 482 provides a ligand contact to Zn(2+). Residues asparagine 532, asparagine 594, asparagine 687, and asparagine 701 are each glycosylated (N-linked (GlcNAc...) asparagine). The interval 581–874 (NTPGLEEQAN…TYLPTFETII (294 aa)) is nuclease. The Ca(2+) site is built by aspartate 751, asparagine 753, aspartate 755, histidine 757, and aspartate 759. Asparagine 820 carries an N-linked (GlcNAc...) asparagine glycan.

In terms of assembly, monomer and homodimer. Zn(2+) serves as cofactor. Post-translationally, N-glycosylated. N-glycosylation is necessary for normal transport to the cell membrane, but is not the apical targeting signal. In terms of tissue distribution, detected at the tip of villi in the small intestine. Detected on basophils and mast cells (at protein level). Detected in the epithelial layer of the small intestine; expression is higher in the proximal part and lower in the distal part of the small intestine.

It localises to the cell membrane. The protein resides in the apical cell membrane. It is found in the secreted. The enzyme catalyses a ribonucleoside 5'-triphosphate + H2O = a ribonucleoside 5'-phosphate + diphosphate + H(+). The catalysed reaction is UDP-N-acetyl-alpha-D-glucosamine + H2O = N-acetyl-alpha-D-glucosamine 1-phosphate + UMP + 2 H(+). It catalyses the reaction ATP + H2O = AMP + diphosphate + H(+). It carries out the reaction CTP + H2O = CMP + diphosphate + H(+). The enzyme catalyses GTP + H2O = GMP + diphosphate + H(+). The catalysed reaction is UTP + H2O = UMP + diphosphate + H(+). It catalyses the reaction Hydrolytically removes 5'-nucleotides successively from the 3'-hydroxy termini of 3'-hydroxy-terminated oligonucleotides.. It carries out the reaction P(1),P(3)-bis(5'-adenosyl) triphosphate + H2O = AMP + ADP + 2 H(+). The enzyme catalyses P(1),P(4)-bis(5'-adenosyl) tetraphosphate + H2O = AMP + ATP + 2 H(+). The catalysed reaction is P(1),P(5)-bis(5'-adenosyl) pentaphosphate + H2O = adenosine 5'-tetraphosphate + AMP + 2 H(+). It catalyses the reaction P(1),P(4)-bis(5'-guanosyl) tetraphosphate + H2O = GMP + GTP + 2 H(+). Hydrolase that metabolizes extracellular nucleotides, including ATP, GTP, UTP and CTP. Limits mast cells and basophils response during inflammation and during the chronic phases of allergic responses by eliminating extracellular ATP, a signaling molecule activating these cells in an autocrine manner. Metabolizes extracellular ATP in the lumen of the small intestine, and thereby prevents ATP-induced apoptosis of intestinal plasmacytoid dendritic cells. Has a broad specificity and can also hydrolyze UDP-GlcNAc into UMP and GlcNAc-1-phosphate and potentially several other intracellular nucleotide sugars, including UDP-GalNAc, CMP-NeuAc, GDP-Fuc, and UDP-GlcA. Thereby, could modulate glycan biosynthesis and protein glycosylation. Can hydrolyze extracellular dinucleoside polyphosphates, including the vasoactive adenosine polyphosphates as well. In addition, displays an alkaline phosphodiesterase activity in vitro. This chain is Ectonucleotide pyrophosphatase/phosphodiesterase family member 3, found in Mus musculus (Mouse).